We begin with the raw amino-acid sequence, 250 residues long: Putative endonuclease (250 aa).

Putative endonuclease. The sequence is that of Putative endonuclease from Escherichia coli (Enterobacteria phage T5).